Consider the following 276-residue polypeptide: UPF0328 protein ECU08_2080 (276 aa).

Residues 1–24 (MGIIDVQRSHLTATPSKERDAPAH) form a disordered region.

It belongs to the UPF0328 family.

This is UPF0328 protein ECU08_2080 from Encephalitozoon cuniculi (strain GB-M1) (Microsporidian parasite).